The sequence spans 436 residues: Antilisterial bacteriocin subtilosin biosynthesis protein AlbD (436 aa).

10 helical membrane passes run 27-47 (IAAG…QAGI), 55-75 (TYII…SVTS), 113-133 (LFFF…GAQT), 134-154 (LFWL…GVVL), 164-184 (LMFL…ALMP), 187-207 (TIPL…PVFL), 240-260 (AMLL…FQMM), 270-290 (IYIV…LYSI), 315-335 (FYSG…GFIS), and 395-415 (AILA…LVIV).

It is found in the cell membrane. Involved in the production of the bacteriocin subtilosin. Required for immunity to subtilosin. The chain is Antilisterial bacteriocin subtilosin biosynthesis protein AlbD (albD) from Bacillus subtilis (strain 168).